A 579-amino-acid polypeptide reads, in one-letter code: Altered inheritance of mitochondria protein 9, mitochondrial (579 aa).

A mitochondrion-targeting transit peptide spans 1–36; sequence MQSWNSQSFLSSHFTMLRYACKRAVPRLNAASGLRF.

The protein belongs to the AIM9 family.

It is found in the mitochondrion. The sequence is that of Altered inheritance of mitochondria protein 9, mitochondrial (AIM9) from Yarrowia lipolytica (strain CLIB 122 / E 150) (Yeast).